The sequence spans 117 residues: Replication initiation control protein YabA (117 aa).

Zn(2+) contacts are provided by H87, C89, C103, and C106.

This sequence belongs to the YabA family. In terms of assembly, homotetramer. Interacts with both DnaA and DnaN, acting as a bridge between these two proteins. Requires Zn(2+) as cofactor.

It localises to the cytoplasm. The protein localises to the nucleoid. Its function is as follows. Involved in control of chromosome replication initiation. Inhibits the cooperative binding of DnaA to the oriC region, thus negatively regulating initiation of chromosome replication. Inhibits the ability of DnaA-ATP to form a helix on DNA; does not disassemble preformed DnaA-DNA helices. Decreases the residence time of DnaA on the chromosome at its binding sites (oriC, replication forks and promoter-binding sites). Tethers DnaA to the replication machinery via the DNA polymerase beta sliding clamp subunit (dnaN). Associates with oriC and other DnaA targets on the chromosome in a DnaA-dependent manner. This Latilactobacillus sakei subsp. sakei (strain 23K) (Lactobacillus sakei subsp. sakei) protein is Replication initiation control protein YabA.